The chain runs to 408 residues: Phosphoglycerate kinase (408 aa).

Substrate-binding positions include 28 to 30 (DIN), Arg43, 66 to 69 (HQGR), Arg123, and Arg163. Residues Glu334 and 358 to 361 (GGHT) each bind ATP.

The protein belongs to the phosphoglycerate kinase family. Monomer.

The protein localises to the cytoplasm. It catalyses the reaction (2R)-3-phosphoglycerate + ATP = (2R)-3-phospho-glyceroyl phosphate + ADP. It functions in the pathway carbohydrate degradation; glycolysis; pyruvate from D-glyceraldehyde 3-phosphate: step 2/5. This Pyrobaculum aerophilum (strain ATCC 51768 / DSM 7523 / JCM 9630 / CIP 104966 / NBRC 100827 / IM2) protein is Phosphoglycerate kinase.